The sequence spans 205 residues: Cryptic plasmid protein C (205 aa).

A disordered region spans residues 142 to 205 (THGYSDPDDP…RAGNAGKGRF (64 aa)). The span at 155–174 (QSMTQAKDLPRNTQEAAQSI) shows a compositional bias: polar residues. Positions 189–205 (QAKKPRRRAGNAGKGRF) are enriched in basic residues.

This chain is Cryptic plasmid protein C (cppC), found in Neisseria gonorrhoeae.